Here is a 399-residue protein sequence, read N- to C-terminus: Large envelope protein (399 aa).

Residue methionine 1 is modified to N-acetylmethionine. The N-myristoyl glycine; by host moiety is linked to residue glycine 2. Positions 2 to 118 are pre-S1; sequence GLSWTVPLEW…PPLRDTHPQA (117 aa). The pre-S stretch occupies residues 2–173; sequence GLSWTVPLEW…FSRIGDPAPN (172 aa). At 2–180 the chain is on the virion surface; in external conformation side; sequence GLSWTVPLEW…APNMESITSG (179 aa). The Intravirion; in internal conformation segment spans residues 2 to 252; the sequence is GLSWTVPLEW…PGYRWMCLRR (251 aa). Serine 4 is a glycosylation site (N-linked (GlcNAc...) asparagine). The disordered stretch occupies residues 85–110; sequence KTLPADPPPASTNRQSGRQPTPITPP. Residues 95-105 are compositionally biased toward polar residues; it reads STNRQSGRQPT. The interval 119 to 173 is pre-S2; it reads MQWNSTTFHQALQDPRVRGLYFPAGGSSSGTVNPVPTTASLISSIFSRIGDPAPN. A helical membrane pass occupies residues 181-201; sequence FLGPLLVLQAGFFLLTKILTI. The Intravirion; in external conformation portion of the chain corresponds to 202–252; the sequence is PQSLDSWWTSLNFLGGAPVCLGQNSQSPTSNHSPTSCPPICPGYRWMCLRR. Residues 253–273 form a helical membrane-spanning segment; sequence FIIFLFILLLCLIFLLVLLDY. Topologically, residues 274–347 are virion surface; it reads QGMLPVCPLI…WASARFSWLS (74 aa). Asparagine 319 carries an N-linked (GlcNAc...) asparagine; by host glycan. Residues 348–368 form a helical membrane-spanning segment; that stretch reads LLVPFVQWFAGLSPTVWLSVI. The Intravirion portion of the chain corresponds to 369–374; the sequence is WMMWYW. A helical membrane pass occupies residues 375–397; sequence GPSLYDILSPFIPLLPIFFCLWV. At 398–399 the chain is on the virion surface side; it reads YI.

Belongs to the orthohepadnavirus major surface antigen family. In its internal form (Li-HBsAg), interacts with the capsid protein and with the isoform S. Interacts with host chaperone CANX. As to quaternary structure, associates with host chaperone CANX through its pre-S2 N glycan; this association may be essential for isoform M proper secretion. In terms of assembly, interacts with isoform L. Interacts with the antigens of satellite virus HDV (HDVAgs); this interaction is required for encapsidation of HDV genomic RNA. In terms of processing, isoform M is N-terminally acetylated by host at a ratio of 90%, and N-glycosylated by host at the pre-S2 region. Myristoylated.

It is found in the virion membrane. The large envelope protein exists in two topological conformations, one which is termed 'external' or Le-HBsAg and the other 'internal' or Li-HBsAg. In its external conformation the protein attaches the virus to cell receptors and thereby initiating infection. This interaction determines the species specificity and liver tropism. This attachment induces virion internalization predominantly through caveolin-mediated endocytosis. The large envelope protein also assures fusion between virion membrane and endosomal membrane. In its internal conformation the protein plays a role in virion morphogenesis and mediates the contact with the nucleocapsid like a matrix protein. Functionally, the middle envelope protein plays an important role in the budding of the virion. It is involved in the induction of budding in a nucleocapsid independent way. In this process the majority of envelope proteins bud to form subviral lipoprotein particles of 22 nm of diameter that do not contain a nucleocapsid. The protein is Large envelope protein of Homo sapiens (Human).